Here is a 597-residue protein sequence, read N- to C-terminus: MERPAPLAVLPFSDPAHALSLLRGLSQLRAERKFLDVTLEAAGGRDFPAHRAVLAAASPYFRAMFAGQLRESRAERVRLHGVPPDMLQLLLDFSYTGRVAVSGDNAEPLLRAADLLQFPAVKEACGAFLQQQLDLTNCLDMQDFAEAFSCAGLASAAQRFILRHVGELGAEQLERLPLARLLRYLRDDGLCVPKEEAAYQLALRWVRADPPRRAAHWPQLLESVRLPFVRRFYLLAHVEAEPLVARCPPCLRLLREARDFQAARYDRHDRGPCPRMRPRPSTGLAEILVLVGGCDQDCDELVTVDCYNPQTGQWRYLAEFPDHLGGGYSIVALGNDIYVTGGSDGSRLYDCVWRYNSSVNEWTEVAPMLKAREYHSSSVLDGLLYVVAADSTERYDHTTDSWEALQPMTYPMDNCSTTACRGRLYAIGSLAGKETMVMQCYHPDMDLWSLVDCGQLPPWSFAPKTVTLNGLMYFIRDDSAEVDVYNPTKNEWDKIPSMNQVHVGGSLAVLGGKLYVSGGYDNTFELSDVVEAYDPETRAWSVVGRLPEPTFWHGSVSIFRQFMPQTPLGGRGFELDGGSSDMDVGQPRPPQNPAELH.

Residues L35–G103 form the BTB domain. The 102-residue stretch at C138–E239 folds into the BACK domain. 6 Kelch repeats span residues I287–N335, D336–G382, L384–G422, L424–P463, K464–G512, and K513–R560. The tract at residues G570–H597 is disordered. The segment covering P587–H597 has biased composition (pro residues).

Component of the BCR(KLHL21) E3 ubiquitin ligase complex, at least composed of CUL3, KLHL21 and RBX1.

The protein resides in the cytoplasm. It is found in the cytoskeleton. Its subcellular location is the spindle. It functions in the pathway protein modification; protein ubiquitination. In terms of biological role, substrate-specific adapter of a BCR (BTB-CUL3-RBX1) E3 ubiquitin-protein ligase complex required for efficient chromosome alignment and cytokinesis. The BCR(KLHL21) E3 ubiquitin ligase complex regulates localization of the chromosomal passenger complex (CPC) from chromosomes to the spindle midzone in anaphase and mediates the ubiquitination of AURKB. Ubiquitination of AURKB by BCR(KLHL21) E3 ubiquitin ligase complex may not lead to its degradation by the proteasome. The chain is Kelch-like protein 21 (KLHL21) from Bos taurus (Bovine).